The sequence spans 300 residues: Putative lysophosphatidic acid:oleoyl-CoA acyltransferase (300 aa).

The chain crosses the membrane as a helical span at residues 32–52 (WILIVVVMILRVPLCIISVTL). Residues 115–120 (HSSPLD) carry the HXXXXD motif motif.

The protein belongs to the 1-acyl-sn-glycerol-3-phosphate acyltransferase family.

The protein localises to the lipid droplet. It localises to the endoplasmic reticulum membrane. It is found in the golgi apparatus membrane. The catalysed reaction is a 1-acyl-sn-glycero-3-phosphate + an acyl-CoA = a 1,2-diacyl-sn-glycero-3-phosphate + CoA. In terms of biological role, acyl-CoA-dependent lysophosphatidic acid acyltransferase with preference for oleoyl-CoA. Involved in triacylglyceride homeostasis and lipid droplet formation. Involved in vacuolar protein sorting. The protein is Putative lysophosphatidic acid:oleoyl-CoA acyltransferase (vps66) of Schizosaccharomyces pombe (strain 972 / ATCC 24843) (Fission yeast).